Reading from the N-terminus, the 459-residue chain is Putrescine aminotransferase (459 aa).

Pyridoxal 5'-phosphate-binding positions include 150-151 and Gln-274; that span reads GT. Residue Lys-300 is modified to N6-(pyridoxal phosphate)lysine. Thr-332 is a pyridoxal 5'-phosphate binding site.

It belongs to the class-III pyridoxal-phosphate-dependent aminotransferase family. Putrescine aminotransferase subfamily. It depends on pyridoxal 5'-phosphate as a cofactor.

The catalysed reaction is an alkane-alpha,omega-diamine + 2-oxoglutarate = an omega-aminoaldehyde + L-glutamate. The enzyme catalyses putrescine + 2-oxoglutarate = 1-pyrroline + L-glutamate + H2O. It catalyses the reaction cadaverine + 2-oxoglutarate = 5-aminopentanal + L-glutamate. It functions in the pathway amine and polyamine degradation; putrescine degradation; 4-aminobutanal from putrescine (transaminase route): step 1/1. Functionally, catalyzes the aminotransferase reaction from putrescine to 2-oxoglutarate, leading to glutamate and 4-aminobutanal, which spontaneously cyclizes to form 1-pyrroline. This is the first step in one of two pathways for putrescine degradation, where putrescine is converted into 4-aminobutanoate (gamma-aminobutyrate or GABA) via 4-aminobutanal. Also functions as a cadaverine transaminase in a a L-lysine degradation pathway to succinate that proceeds via cadaverine, glutarate and L-2-hydroxyglutarate. This Salmonella paratyphi A (strain ATCC 9150 / SARB42) protein is Putrescine aminotransferase.